A 399-amino-acid polypeptide reads, in one-letter code: Delta(12) acyl-lipid conjugase (11E,13E-forming) (399 aa).

A disordered region spans residues R11–E30. 2 consecutive transmembrane segments (helical) span residues F61–Y81 and L93–A113. Positions H114–H118 match the Histidine box-1 motif. Residues L126 to F146 form a helical membrane-spanning segment. The Histidine box-2 signature appears at H150–H154. The next 3 helical transmembrane spans lie at V188–S208, V232–A252, and G258–I278. The Histidine box-3 motif lies at H325–H329.

Belongs to the fatty acid desaturase type 1 family. In terms of tissue distribution, expressed in developing seeds, but not in leaves.

It is found in the membrane. It catalyses the reaction a (9Z,12Z)-octadecadienoyl-containing glycerolipid + 2 Fe(II)-[cytochrome b5] + O2 + 2 H(+) = a (9Z,11E,13E)-octadecatrienoyl-containing glycerolipid + 2 Fe(III)-[cytochrome b5] + 2 H2O. It carries out the reaction (9Z,12Z,15Z)-octadecatrienoyl-containing glycerolipid + 2 Fe(II)-[cytochrome b5] + O2 + 2 H(+) = a (9Z,11E,13E,15Z)-octadecatetraenoyl-containing glycerolipid + 2 Fe(III)-[cytochrome b5] + 2 H2O. The protein operates within lipid metabolism; polyunsaturated fatty acid biosynthesis. Its function is as follows. Converts linoleic acid to alpha-eleostearic acid (18:3(9Z,11E,13E)) and alpha-linolenic acid to alpha-parinaric acid (18:4(9Z,11E, 13E, 15Z)). Converts a single cis double bond at carbon 12 to two conjugated trans bonds at positions 11 and 13. This is Delta(12) acyl-lipid conjugase (11E,13E-forming) from Momordica charantia (Bitter gourd).